A 343-amino-acid chain; its full sequence is NADH-ubiquinone oxidoreductase chain 1 (343 aa).

Helical transmembrane passes span 4–24, 70–90, 106–126, 154–174, 177–197, 224–244, 278–298, and 316–336; these read LISIIGKYISCLPALLIVAFL, ANIILLFLGPIITLIFSLLGY, LGILYILAVSSLATYGILLAG, FYILLVILFTGSLNLTTIIES, VVYFILPLLPIFLIFFIGCIA, VIFMIFFFLAQYASIVLICIL, GLSSLNLAIKTAFLIFVFIWV, and TILLPIIIAYVVLLPCIVIGL.

The protein belongs to the complex I subunit 1 family.

It is found in the mitochondrion inner membrane. It carries out the reaction a ubiquinone + NADH + 5 H(+)(in) = a ubiquinol + NAD(+) + 4 H(+)(out). Functionally, core subunit of the mitochondrial membrane respiratory chain NADH dehydrogenase (Complex I) that is believed to belong to the minimal assembly required for catalysis. Complex I functions in the transfer of electrons from NADH to the respiratory chain. The immediate electron acceptor for the enzyme is believed to be ubiquinone. The protein is NADH-ubiquinone oxidoreductase chain 1 (ND1) of Trichophyton rubrum (Athlete's foot fungus).